The chain runs to 139 residues: Putative pre-16S rRNA nuclease (139 aa).

Belongs to the YqgF nuclease family.

The protein localises to the cytoplasm. In terms of biological role, could be a nuclease involved in processing of the 5'-end of pre-16S rRNA. This is Putative pre-16S rRNA nuclease from Photorhabdus laumondii subsp. laumondii (strain DSM 15139 / CIP 105565 / TT01) (Photorhabdus luminescens subsp. laumondii).